We begin with the raw amino-acid sequence, 754 residues long: MRRSRFVAQVFSDVTFADASTISAPIFTMSTRAPYRGARGRGRGRGGRSFSDRPYNDDAGRDQFVTGDSHFQSVHDANFRFRHGEPYRQHQPPLDQRQQPPFNQNYEFRPPPPSRGQWQQFRQPNQFPSNQNYAACPPPPFYQNQMSRPPPQQSFRQRPRSKPSDYREWEYAKTPPSPGSEKFVVLSYNILADYLANDHWRSLYFHIPRNMLSWGWRKSKLVFELSLWSADIMCLQEVDKFQDLEEEMKHRGYSAIWKMRTGNAVDGCAIFWRSNRFKLVHEESIQFNQLGLRDNVAQICVLETLLTSHTKENETPPPESSAGSHRVVICNIHVLFNPKRGDFKLGQVRTLLDKAHAVSKLWDDAPIVLCGDFNCTPKSPLYNFISDRKLDLSGLARDKVSGQVSAEFRPPRPENYTTRYQSANKSPQGQVQPPNLITNAHMENNSNIDVGTAPSEKTSELPCGDTILAGHEATSSSDQVLPCENMASDCQFGIENRKPDDSGNLSTAEDLSSLTISDTEPQHASSAREDLNTDRSVSSGLSETEQTPEEICSSDQDISSSLSTKVDTFVAEMKLDGLKLDEPVVFAQDEESLGEDGETFLAKLHDNNENLSQKGELVSEVPLKWSSEALNSDKITYSPSSWTPMEIATATGDPERTTVEHALELKSTYSEVEGQANTRDENGEPVVTSYHRCFMGTVDYIWRSEGLQTVRVLAPIPKQAMQWTPGFPTPKWGSDHIALVSELAFCSSKTLPKS.

Disordered stretches follow at residues Pro34 to Val65 and Glu85 to Pro176. The span at Phe50–Arg61 shows a compositional bias: basic and acidic residues. 2 stretches are compositionally biased toward polar residues: residues Gln96 to Tyr106 and Gly116 to Tyr133. Over residues Lys162 to Tyr171 the composition is skewed to basic and acidic residues. Mg(2+) is bound at residue Glu237. 2 disordered regions span residues Val404–Val431 and Ile494–Ile558. Composition is skewed to polar residues over residues Asn415–Val431, Gly503–Ser525, and Asp534–Glu545.

The protein belongs to the CCR4/nocturin family. Component of the CCR4-NOT complex, at least composed of CRR4 and CAF1 proteins. The cofactor is Mg(2+).

Its subcellular location is the nucleus. It localises to the cytoplasm. It catalyses the reaction Exonucleolytic cleavage of poly(A) to 5'-AMP.. Functionally, acts as a catalytic component of the CCR4-NOT core complex, which in the nucleus seems to be a general transcription factor, and in the cytoplasm the major mRNA deadenylase involved in mRNA turnover. The protein is Carbon catabolite repressor protein 4 homolog 6 (CCR4-6) of Arabidopsis thaliana (Mouse-ear cress).